The chain runs to 724 residues: Actin-related protein 5 (724 aa).

Disordered stretches follow at residues 358-391 (QSLR…LMNV), 412-450 (TTAE…ESYL), and 467-488 (KKRL…IGRG). Over residues 414–446 (AEGRLRARQKRNEEELEKEKRNQLEEERRRENP) the composition is skewed to basic and acidic residues. At serine 542 the chain carries Phosphoserine.

Belongs to the actin family. ARP5 subfamily. Component of the INO80 chromatin-remodeling complex. Interacts with EEN. As to expression, expressed ubiquitously in seedlings, roots, leaves, buds, flowers and siliques.

It localises to the nucleus. The protein localises to the nucleoplasm. It is found in the cytoplasm. In terms of biological role, probable subunit of a chromatin-remodeling complex. Involved in DNA repair. Required for multicellular development of all organs. The protein is Actin-related protein 5 of Arabidopsis thaliana (Mouse-ear cress).